The sequence spans 332 residues: Autoinducer 2 import system permease protein LsrD (332 aa).

Transmembrane regions (helical) follow at residues 5 to 25 (LNWE…FGAL), 43 to 63 (ICIG…GIDI), 83 to 103 (GWPL…CGLF), 116 to 136 (LVIT…LSGM), 160 to 180 (LGGL…FWLL), 210 to 230 (IPYV…LVMV), and 259 to 279 (IYGG…VGYL).

It belongs to the binding-protein-dependent transport system permease family. AraH/RbsC subfamily. In terms of assembly, the complex is composed of two ATP-binding proteins (LsrA), two transmembrane proteins (LsrC and LsrD) and a solute-binding protein (LsrB).

Its subcellular location is the cell inner membrane. In terms of biological role, part of the ABC transporter complex LsrABCD involved in autoinducer 2 (AI-2) import. Probably responsible for the translocation of the substrate across the membrane. This chain is Autoinducer 2 import system permease protein LsrD (lsrD), found in Klebsiella pneumoniae subsp. pneumoniae (strain ATCC 700721 / MGH 78578).